The sequence spans 344 residues: Heat-inducible transcription repressor HrcA (344 aa).

The protein belongs to the HrcA family.

In terms of biological role, negative regulator of class I heat shock genes (grpE-dnaK-dnaJ and groELS operons). Prevents heat-shock induction of these operons. In Streptococcus agalactiae serotype Ia (strain ATCC 27591 / A909 / CDC SS700), this protein is Heat-inducible transcription repressor HrcA.